The chain runs to 603 residues: Phosphoribosylformylglycinamidine synthase subunit PurL (603 aa).

Residue His-32 is part of the active site. 2 residues coordinate ATP: Tyr-35 and Lys-68. Residue Glu-70 coordinates Mg(2+). Residues 71 to 74 (SHNH) and Arg-93 each bind substrate. Residue His-72 is the Proton acceptor of the active site. Residue Asp-94 coordinates Mg(2+). ATP-binding positions include Asp-107 and 136–139 (GELR). Substrate contacts are provided by Gly-189 and Gln-208. Asp-236 contacts Mg(2+). 280–282 (ESQ) serves as a coordination point for substrate. 4 residues coordinate ATP: Gly-388, Lys-429, Asn-442, and Gly-477. Asn-478 is a binding site for Mg(2+). A substrate-binding site is contributed by Ser-480. Positions 549 and 556 each coordinate ATP.

The protein belongs to the FGAMS family. Monomer. Part of the FGAM synthase complex composed of 1 PurL, 1 PurQ and 2 PurS subunits.

The protein resides in the cytoplasm. It catalyses the reaction N(2)-formyl-N(1)-(5-phospho-beta-D-ribosyl)glycinamide + L-glutamine + ATP + H2O = 2-formamido-N(1)-(5-O-phospho-beta-D-ribosyl)acetamidine + L-glutamate + ADP + phosphate + H(+). It participates in purine metabolism; IMP biosynthesis via de novo pathway; 5-amino-1-(5-phospho-D-ribosyl)imidazole from N(2)-formyl-N(1)-(5-phospho-D-ribosyl)glycinamide: step 1/2. Functionally, part of the phosphoribosylformylglycinamidine synthase complex involved in the purines biosynthetic pathway. Catalyzes the ATP-dependent conversion of formylglycinamide ribonucleotide (FGAR) and glutamine to yield formylglycinamidine ribonucleotide (FGAM) and glutamate. The FGAM synthase complex is composed of three subunits. PurQ produces an ammonia molecule by converting glutamine to glutamate. PurL transfers the ammonia molecule to FGAR to form FGAM in an ATP-dependent manner. PurS interacts with PurQ and PurL and is thought to assist in the transfer of the ammonia molecule from PurQ to PurL. This Thermotoga maritima (strain ATCC 43589 / DSM 3109 / JCM 10099 / NBRC 100826 / MSB8) protein is Phosphoribosylformylglycinamidine synthase subunit PurL.